The sequence spans 220 residues: Protein GrpE (220 aa).

The disordered stretch occupies residues 1-55; that stretch reads MCGGDVQGQGVASGCDEALERADSLRASDPVPVESGEGSVPGEHSQELETGASEE.

The protein belongs to the GrpE family. Homodimer.

It localises to the cytoplasm. Functionally, participates actively in the response to hyperosmotic and heat shock by preventing the aggregation of stress-denatured proteins, in association with DnaK and GrpE. It is the nucleotide exchange factor for DnaK and may function as a thermosensor. Unfolded proteins bind initially to DnaJ; upon interaction with the DnaJ-bound protein, DnaK hydrolyzes its bound ATP, resulting in the formation of a stable complex. GrpE releases ADP from DnaK; ATP binding to DnaK triggers the release of the substrate protein, thus completing the reaction cycle. Several rounds of ATP-dependent interactions between DnaJ, DnaK and GrpE are required for fully efficient folding. In Treponema pallidum (strain Nichols), this protein is Protein GrpE.